The primary structure comprises 437 residues: Amino-acid acetyltransferase (437 aa).

Residues 289–437 (ECIRLATSFD…SKVLMLALDN (149 aa)) enclose the N-acetyltransferase domain.

Belongs to the acetyltransferase family. ArgA subfamily.

It localises to the cytoplasm. It carries out the reaction L-glutamate + acetyl-CoA = N-acetyl-L-glutamate + CoA + H(+). It functions in the pathway amino-acid biosynthesis; L-arginine biosynthesis; N(2)-acetyl-L-ornithine from L-glutamate: step 1/4. The chain is Amino-acid acetyltransferase from Haemophilus ducreyi (strain 35000HP / ATCC 700724).